The chain runs to 400 residues: Queuine tRNA-ribosyltransferase catalytic subunit (400 aa).

Catalysis depends on D89, which acts as the Proton acceptor. Residues 89 to 93, D143, Q185, and G212 contribute to the substrate site; that span reads DSGGF. The RNA binding stretch occupies residues 243–249; the sequence is GVGFPVD. The active-site Nucleophile is the D262. The tract at residues 267–271 is RNA binding; important for wobble base 34 recognition; it reads TRTAR. Positions 301, 303, 306, and 331 each coordinate Zn(2+).

Belongs to the queuine tRNA-ribosyltransferase family. Heterodimer of a catalytic subunit and an accessory subunit. Zn(2+) is required as a cofactor.

Its subcellular location is the cytoplasm. It carries out the reaction guanosine(34) in tRNA + queuine = queuosine(34) in tRNA + guanine. Its function is as follows. Catalytic subunit of the queuine tRNA-ribosyltransferase (TGT) that catalyzes the base-exchange of a guanine (G) residue with queuine (Q) at position 34 (anticodon wobble position) in tRNAs with GU(N) anticodons (tRNA-Asp, -Asn, -His and -Tyr), resulting in the hypermodified nucleoside queuosine (7-(((4,5-cis-dihydroxy-2-cyclopenten-1-yl)amino)methyl)-7-deazaguanosine). Catalysis occurs through a double-displacement mechanism. The nucleophile active site attacks the C1' of nucleotide 34 to detach the guanine base from the RNA, forming a covalent enzyme-RNA intermediate. The proton acceptor active site deprotonates the incoming queuine, allowing a nucleophilic attack on the C1' of the ribose to form the product. The protein is Queuine tRNA-ribosyltransferase catalytic subunit of Caenorhabditis elegans.